Reading from the N-terminus, the 168-residue chain is Myelin basic protein (168 aa).

N-acetylalanine is present on Ala-1. Phosphoserine is present on residues Ser-7 and Ser-12. Phosphotyrosine is present on Tyr-14. At Thr-17 the chain carries Phosphothreonine. At Ser-19 the chain carries Phosphoserine. Thr-20 is subject to Phosphothreonine. Citrulline is present on residues Arg-25 and Arg-31. Residue Thr-35 is modified to Phosphothreonine. Ser-40 carries the post-translational modification Phosphoserine. A disordered region spans residues Gly-42 to Val-84. An omega-N-methylarginine mark is found at Arg-43 and Arg-49. The interval Phe-45–His-86 is induces experimental autoimmune encephalomyelitis (EAE). Ser-56 is modified (phosphoserine). Residue Thr-65 is modified to Phosphothreonine. At Tyr-67 the chain carries Phosphotyrosine. Residue Ser-74 is modified to Phosphoserine. Residues Thr-93 and Thr-96 each carry the phosphothreonine modification. Gln-101 bears the Deamidated glutamine; partial mark. At Arg-105 the chain carries Omega-N-methylarginine; alternate. Arg-105 bears the Symmetric dimethylarginine; alternate mark. Phosphoserine is present on Ser-113. Lys-120 is modified (N6-acetyllysine). Arg-128 carries the post-translational modification Citrulline. Gln-145 is subject to Deamidated glutamine. Arg-157 carries the post-translational modification Citrulline. Residue Ser-159 is modified to Phosphoserine. Position 163 is a phosphoserine; by UHMK1 (Ser-163). Arg-168 carries the citrulline modification.

This sequence belongs to the myelin basic protein family. In terms of assembly, homodimer. As in other animals, several charge isomers may be produced as a result of optional post-translational modifications, such as phosphorylation of serine or threonine residues, deamidation of glutamine or asparagine residues, citrullination and methylation of arginine residues. Post-translationally, phosphorylated by TAOK2, VRK2, MAPK11, MAPK12, MAPK14 and MINK1. In terms of processing, proteolytically cleaved in B cell lysosomes by cathepsin CTSG which degrades the major immunogenic MBP epitope and prevents the activation of MBP-specific autoreactive T cells. In terms of tissue distribution, found in both the central and the peripheral nervous system.

It localises to the myelin membrane. Is, with PLP, the most abundant protein component of the myelin membrane in the CNS. Has a role in both the formation and stabilization of this compact multilayer arrangement of bilayers. Each splice variant and charge isomer may have a specialized function in the assembly of an optimized, biochemically functional myelin membrane. The sequence is that of Myelin basic protein (MBP) from Oryctolagus cuniculus (Rabbit).